The following is a 261-amino-acid chain: uncharacterized protein (261 aa).

The signal sequence occupies residues 1–22; that stretch reads MRYLKKVTIYISLLILTIFIGG. Cys-23 is lipidated: N-palmitoyl cysteine. Residue Cys-23 is the site of S-diacylglycerol cysteine attachment.

It belongs to the staphylococcal tandem lipoprotein family.

The protein localises to the cell membrane. This is an uncharacterized protein from Staphylococcus epidermidis (strain ATCC 35984 / DSM 28319 / BCRC 17069 / CCUG 31568 / BM 3577 / RP62A).